Consider the following 247-residue polypeptide: Putative urease accessory protein UreD homolog (247 aa).

It belongs to the UreD family. As to quaternary structure, ureD, UreF and UreG form a complex that acts as a GTP-hydrolysis-dependent molecular chaperone, activating the urease apoprotein by helping to assemble the nickel containing metallocenter of UreC. The UreE protein probably delivers the nickel.

The protein resides in the cytoplasm. Functionally, required for maturation of urease via the functional incorporation of the urease nickel metallocenter. The polypeptide is Putative urease accessory protein UreD homolog (Escherichia coli O157:H7).